We begin with the raw amino-acid sequence, 223 residues long: RNA-free ribonuclease P (223 aa).

Belongs to the HARP family.

The catalysed reaction is Endonucleolytic cleavage of RNA, removing 5'-extranucleotides from tRNA precursor.. RNA-free RNase P that catalyzes the removal of the 5'-leader sequence from pre-tRNA to produce the mature 5'-terminus. The chain is RNA-free ribonuclease P from Methanococcus maripaludis (strain C5 / ATCC BAA-1333).